A 346-amino-acid chain; its full sequence is tRNA N6-adenosine threonylcarbamoyltransferase (346 aa).

Residues His-111 and His-115 each contribute to the Fe cation site. Residues 134 to 138 (LVSGG), Asp-167, Gly-180, and Asn-279 each bind substrate. Asp-307 contributes to the Fe cation binding site.

This sequence belongs to the KAE1 / TsaD family. It depends on Fe(2+) as a cofactor.

It is found in the cytoplasm. It catalyses the reaction L-threonylcarbamoyladenylate + adenosine(37) in tRNA = N(6)-L-threonylcarbamoyladenosine(37) in tRNA + AMP + H(+). Its function is as follows. Required for the formation of a threonylcarbamoyl group on adenosine at position 37 (t(6)A37) in tRNAs that read codons beginning with adenine. Is involved in the transfer of the threonylcarbamoyl moiety of threonylcarbamoyl-AMP (TC-AMP) to the N6 group of A37, together with TsaE and TsaB. TsaD likely plays a direct catalytic role in this reaction. The polypeptide is tRNA N6-adenosine threonylcarbamoyltransferase (Burkholderia cenocepacia (strain ATCC BAA-245 / DSM 16553 / LMG 16656 / NCTC 13227 / J2315 / CF5610) (Burkholderia cepacia (strain J2315))).